A 107-amino-acid polypeptide reads, in one-letter code: High mobility group protein HMG-I/HMG-Y (107 aa).

A disordered region spans residues 1–107 (MSESSSKSSQ…ISQESSEEEQ (107 aa)). S2 bears the N-acetylserine mark. N6-acetyllysine is present on K7. ADP-ribosylserine is present on S8. S9 carries the post-translational modification ADP-ribosylserine; alternate. Phosphoserine; alternate is present on S9. At K15 the chain carries N6-acetyllysine; alternate. Residue K15 forms a Glycyl lysine isopeptide (Lys-Gly) (interchain with G-Cter in SUMO2); alternate linkage. A compositionally biased stretch (basic and acidic residues) spans 15 to 24 (KQEKDGTEKR). Residues 21 to 31 (TEKRGRGRPRK) constitute a DNA-binding region (a.T hook 1). Residue R26 is modified to Asymmetric dimethylarginine; alternate. Residue R26 is modified to Omega-N-methylarginine; alternate. R26 carries the symmetric dimethylarginine; alternate modification. S36 is modified (phosphoserine; by HIPK2 and CDC2). A phosphothreonine mark is found at T39 and V42. A phosphoserine mark is found at S44 and S49. The residue at position 53 (T53) is a Phosphothreonine; by HIPK2 and CDC2. Positions 53–63 (TPKRPRGRPKG) form a DNA-binding region, a.T hook 2. The segment at 53–77 (TPKRPRGRPKGSKNKGAAKTRKTTT) is interaction with HIPK2. A compositionally biased stretch (basic residues) spans 55-74 (KRPRGRPKGSKNKGAAKTRK). Asymmetric dimethylarginine; by PRMT6; alternate occurs at positions 58 and 60. An omega-N-methylarginine; by PRMT6; alternate mark is found at R58 and R60. K67 carries the post-translational modification Phosphothreonine. The residue at position 78 (T78) is a Phosphothreonine; by HIPK2 and CDC2. Positions 78 to 89 (TPGRKPRGRPKK) form a DNA-binding region, a.T hook 3. Over residues 93–107 (EEEEGISQESSEEEQ) the composition is skewed to acidic residues. S99 is subject to Phosphoserine. S102 and S103 each carry phosphoserine; by CK.

The protein belongs to the HMGA family. Interacts with HIPK2. Constitutively phosphorylated on two or three sites. Hyperphosphorylated at early stages of apoptosis, followed by dephosphorylation and methylation, which coincides with chromatin condensation. Isoforms HMG-I and HMG-Y can be phosphorylated by HIPK2. Phosphorylation of HMG-I at Ser-36, Thr-53 and Thr-78 and of HMG-Y at Thr-42 and Thr-67 by HIPK2 modulates DNA-binding affinity. Post-translationally, HMG-Y is not methylated. In terms of processing, methylation at Arg-58 is mutually exclusive with methylation at Arg-60.

Its subcellular location is the nucleus. The protein localises to the chromosome. Its function is as follows. HMG-I/Y bind preferentially to the minor groove of A+T rich regions in double-stranded DNA. It is suggested that these proteins could function in nucleosome phasing and in the 3'-end processing of mRNA transcripts. They are also involved in the transcription regulation of genes containing, or in close proximity to A+T-rich regions. In Homo sapiens (Human), this protein is High mobility group protein HMG-I/HMG-Y (HMGA1).